A 125-amino-acid chain; its full sequence is Small ribosomal subunit protein uS13 (125 aa).

The segment at glycine 95–lysine 125 is disordered.

This sequence belongs to the universal ribosomal protein uS13 family. Part of the 30S ribosomal subunit. Forms a loose heterodimer with protein S19. Forms two bridges to the 50S subunit in the 70S ribosome.

Its function is as follows. Located at the top of the head of the 30S subunit, it contacts several helices of the 16S rRNA. In the 70S ribosome it contacts the 23S rRNA (bridge B1a) and protein L5 of the 50S subunit (bridge B1b), connecting the 2 subunits; these bridges are implicated in subunit movement. Contacts the tRNAs in the A and P-sites. This chain is Small ribosomal subunit protein uS13, found in Cytophaga hutchinsonii (strain ATCC 33406 / DSM 1761 / CIP 103989 / NBRC 15051 / NCIMB 9469 / D465).